A 248-amino-acid polypeptide reads, in one-letter code: Killer cell lectin-like receptor subfamily I member 2 (248 aa).

Residues 1–79 are Cytoplasmic-facing; sequence MHKKKHIKHG…GIDPWLTTWQ (79 aa). The segment at 19 to 44 is disordered; sequence IGTKSPTFQEKQRPSKTDQRSTVWRE. A compositionally biased stretch (basic and acidic residues) spans 28–44; the sequence is EKQRPSKTDQRSTVWRE. Residues 80–100 traverse the membrane as a helical; Signal-anchor for type II membrane protein segment; sequence MITVILATLCIILVTKVGFLI. Topologically, residues 101–248 are extracellular; sequence PSLFSKGEKQ…KKTYICEFNI (148 aa). 3 disulfides stabilise this stretch: Cys-132/Cys-145, Cys-161/Cys-244, and Cys-223/Cys-236. The region spanning 139–245 is the C-type lectin domain; that stretch reads FGNNFYCVFR…CSAKKTYICE (107 aa). Residues Asn-197, Asn-214, and Asn-220 are each glycosylated (N-linked (GlcNAc...) asparagine).

In terms of assembly, heterodimer with KLRE1. In terms of tissue distribution, expressed in natural killer (NK) cells.

Its subcellular location is the cell membrane. In terms of biological role, lectin-like receptor for natural killer (NK) cells. Heterodimer formation with KLRE1 mediates NK cell cytolytic activity. The chain is Killer cell lectin-like receptor subfamily I member 2 from Mus musculus (Mouse).